A 648-amino-acid polypeptide reads, in one-letter code: Spastin (648 aa).

Over 1–40 (MASTVALLRDSSDDRENFDDGETDCVQVGRKRKLTVFFYP) the chain is Cytoplasmic. Positions 41–61 (LLLVFWLLRWVFYQFFLVLCF) form an intramembrane region, helical. Residues 62–648 (VCRGFVPRRH…WNREFGDITV (587 aa)) lie on the Cytoplasmic side of the membrane. Residues 99–174 (HKKAFDFISK…EMARDRLDFL (76 aa)) form the MIT domain. The disordered stretch occupies residues 188–346 (PWHGGVAPAQ…SQRSLLSSRV (159 aa)). The span at 247–266 (TGVTLRRQQQQQLGGVSTVS) shows a compositional bias: low complexity. ATP is bound at residue 414–421 (GPPGNGKT).

Belongs to the AAA ATPase family. Spastin subfamily. In terms of assembly, homohexamer. The homohexamer is stabilized by ATP-binding. The homohexamer may adopt a ring conformation through which microtubules pass prior to being severed. Interacts with microtubules.

It is found in the membrane. It localises to the cytoplasm. The protein resides in the cytoskeleton. The protein localises to the microtubule organizing center. Its subcellular location is the centrosome. It carries out the reaction n ATP + n H2O + a microtubule = n ADP + n phosphate + (n+1) alpha/beta tubulin heterodimers.. ATP-dependent microtubule severing protein. Microtubule severing may promote reorganization of cellular microtubule arrays and the release of microtubules from the microtubule organizing center following nucleation. In Ixodes scapularis (Black-legged tick), this protein is Spastin (spas).